Consider the following 104-residue polypeptide: Large ribosomal subunit protein uL24 (104 aa).

The protein belongs to the universal ribosomal protein uL24 family. In terms of assembly, part of the 50S ribosomal subunit.

In terms of biological role, one of two assembly initiator proteins, it binds directly to the 5'-end of the 23S rRNA, where it nucleates assembly of the 50S subunit. One of the proteins that surrounds the polypeptide exit tunnel on the outside of the subunit. The sequence is that of Large ribosomal subunit protein uL24 from Herminiimonas arsenicoxydans.